Here is a 715-residue protein sequence, read N- to C-terminus: Palmitoyltransferase ZDHHC5 (715 aa).

Topologically, residues 1–13 (MPAESGKRFKPSK) are cytoplasmic. The chain crosses the membrane as a helical span at residues 14–34 (YVPVSAAAIFLVGATTLFFAF). The Extracellular portion of the chain corresponds to 35-38 (TCPG). A helical membrane pass occupies residues 39–59 (LSLYVSPAVPIYNAIMFLFVL). Residues 60 to 148 (ANFSMATFMD…NCIGRRNYRY (89 aa)) lie on the Cytoplasmic side of the membrane. Tyr-91 carries the post-translational modification Phosphotyrosine. The 51-residue stretch at 104 to 154 (KWCATCRFYRPPRCSHCSVCDNCVEEFDHHCPWVNNCIGRRNYRYFFLFLL) folds into the DHHC domain. Cys-134 serves as the catalytic S-palmitoyl cysteine intermediate. The helical transmembrane segment at 149–169 (FFLFLLSLTAHIMGVFGFGLL) threads the bilayer. The Extracellular portion of the chain corresponds to 170–191 (YVLYHIEELSGVRTAVTMAVMC). The helical transmembrane segment at 192 to 212 (VAGLFFIPVAGLTGFHVVLVA) threads the bilayer. Residues 213–715 (RGRTTNEQVT…VGGTTYEISV (503 aa)) are Cytoplasmic-facing. Phosphoserine is present on Ser-247. Positions 289–715 (GELRRTKSKG…VGGTTYEISV (427 aa)) are disordered. Thr-294 is modified (phosphothreonine). A phosphoserine mark is found at Ser-296 and Ser-299. Residue Thr-303 is modified to Phosphothreonine. Ser-345 is modified (phosphoserine). A phosphothreonine mark is found at Thr-348 and Thr-350. The segment covering 359 to 373 (SSSSTSAAMPHSSSA) has biased composition (low complexity). Residues Ser-380, Ser-398, Ser-406, and Ser-409 each carry the phosphoserine modification. Thr-411 bears the Phosphothreonine mark. Phosphoserine is present on residues Ser-415, Ser-425, Ser-429, and Ser-432. Residues 422–432 (SSGSRSSSLKS) show a composition bias toward low complexity. A Phosphothreonine modification is found at Thr-436. Positions 442-478 (QLQSIRSEGTTSTSYKSLANQTRNGSLSYDSLLTPSD) are enriched in polar residues. Phosphoserine occurs at positions 529 and 554. At Arg-617 the chain carries Omega-N-methylarginine. Phosphoserine is present on Ser-621. Thr-659 carries the post-translational modification Phosphothreonine. Residues 666–677 (LKTTYSKSNGQP) are compositionally biased toward polar residues. Ser-684 and Ser-694 each carry phosphoserine. Position 697 is an omega-N-methylarginine (Arg-697).

It belongs to the DHHC palmitoyltransferase family. ERF2/ZDHHC9 subfamily.

It is found in the cell membrane. The enzyme catalyses L-cysteinyl-[protein] + hexadecanoyl-CoA = S-hexadecanoyl-L-cysteinyl-[protein] + CoA. Palmitoyltransferase that catalyzes the addition of palmitate onto various protein substrates such as CTNND2, CD36, GSDMD, NLRP3, NOD1, NOD2, STAT3 and S1PR1 thus plays a role in various biological processes including cell adhesion, inflammation, fatty acid uptake, bacterial sensing or cardiac functions. Plays an important role in the regulation of synapse efficacy by mediating palmitoylation of delta-catenin/CTNND2, thereby increasing synaptic delivery and surface stabilization of alpha-amino-3-hydroxy-5-methyl-4-isoxazole propionic acid receptors (AMPARs). Under basal conditions, remains at the synaptic membrane through FYN-mediated phosphorylation that prevents association with endocytic proteins. Neuronal activity enhances the internalization and trafficking of DHHC5 from spines to dendritic shafts where it palmitoylates delta-catenin/CTNND2. Regulates cell adhesion at the plasma membrane by palmitoylating GOLGA7B and DSG2. Plays a role in innate immune response by mediating the palmitoylation of NOD1 and NOD2 and their proper recruitment to the bacterial entry site and phagosomes. Also participates in fatty acid uptake by palmitoylating CD36 and thereby targeting it to the plasma membrane. Upon binding of fatty acids to CD36, gets phosphorylated by LYN leading to inactivation and subsequent CD36 caveolar endocytosis. Controls oligodendrocyte development by catalyzing STAT3 palmitoylation. Acts as a regulator of inflammatory response by mediating palmitoylation of NLRP3 and GSDMD. Palmitoylates NLRP3 to promote inflammasome assembly and activation. Activates pyroptosis by catalyzing palmitoylation of gasdermin-D (GSDMD), thereby promoting membrane translocation and pore formation of GSDMD. In Pan troglodytes (Chimpanzee), this protein is Palmitoyltransferase ZDHHC5 (ZDHHC5).